The primary structure comprises 197 residues: dTTP/UTP pyrophosphatase (197 aa).

Asp70 functions as the Proton acceptor in the catalytic mechanism.

It belongs to the Maf family. YhdE subfamily. It depends on a divalent metal cation as a cofactor.

The protein localises to the cytoplasm. The catalysed reaction is dTTP + H2O = dTMP + diphosphate + H(+). It catalyses the reaction UTP + H2O = UMP + diphosphate + H(+). Functionally, nucleoside triphosphate pyrophosphatase that hydrolyzes dTTP and UTP. May have a dual role in cell division arrest and in preventing the incorporation of modified nucleotides into cellular nucleic acids. In Salmonella choleraesuis (strain SC-B67), this protein is dTTP/UTP pyrophosphatase (yceF2).